The chain runs to 485 residues: Glutamyl-tRNA(Gln) amidotransferase subunit A (485 aa).

Residues Lys-79 and Ser-154 each act as charge relay system in the active site. Ser-178 serves as the catalytic Acyl-ester intermediate.

The protein belongs to the amidase family. GatA subfamily. Heterotrimer of A, B and C subunits.

It catalyses the reaction L-glutamyl-tRNA(Gln) + L-glutamine + ATP + H2O = L-glutaminyl-tRNA(Gln) + L-glutamate + ADP + phosphate + H(+). Functionally, allows the formation of correctly charged Gln-tRNA(Gln) through the transamidation of misacylated Glu-tRNA(Gln) in organisms which lack glutaminyl-tRNA synthetase. The reaction takes place in the presence of glutamine and ATP through an activated gamma-phospho-Glu-tRNA(Gln). In Staphylococcus aureus (strain Mu3 / ATCC 700698), this protein is Glutamyl-tRNA(Gln) amidotransferase subunit A.